We begin with the raw amino-acid sequence, 581 residues long: FAD-linked oxidoreductase easE (581 aa).

A signal peptide spans 1-25; that stretch reads MYRLLGPLACLALAWFFTWAPSGRC. N-linked (GlcNAc...) asparagine glycans are attached at residues Asn-44 and Asn-73. The region spanning 122–306 is the FAD-binding PCMH-type domain; it reads HQGRIPLYSA…AQATIRVFPD (185 aa). The N-linked (GlcNAc...) asparagine glycan is linked to Asn-369.

It belongs to the oxygen-dependent FAD-linked oxidoreductase family. FAD serves as cofactor.

The protein operates within alkaloid biosynthesis; ergot alkaloid biosynthesis. Its function is as follows. FAD-linked oxidoreductase; part of the gene cluster that mediates the biosynthesis of fungal ergot alkaloid. DmaW catalyzes the first step of ergot alkaloid biosynthesis by condensing dimethylallyl diphosphate (DMAP) and tryptophan to form 4-dimethylallyl-L-tryptophan. The second step is catalyzed by the methyltransferase easF that methylates 4-dimethylallyl-L-tryptophan in the presence of S-adenosyl-L-methionine, resulting in the formation of 4-dimethylallyl-L-abrine. The catalase easC and the FAD-dependent oxidoreductase easE then transform 4-dimethylallyl-L-abrine to chanoclavine-I which is further oxidized by easD in the presence of NAD(+), resulting in the formation of chanoclavine-I aldehyde. Agroclavine dehydrogenase easG then mediates the conversion of chanoclavine-I aldehyde to agroclavine via a non-enzymatic adduct reaction: the substrate is an iminium intermediate that is formed spontaneously from chanoclavine-I aldehyde in the presence of glutathione. Further conversion of agroclavine to paspalic acid is a two-step process involving oxidation of agroclavine to elymoclavine and of elymoclavine to paspalic acid, the second step being performed by the elymoclavine oxidase cloA. However, cloA does not encode a functional enzyme indicating that C.fusiformis terminates its ergot alkaloid pathway at elymoclavine. This is FAD-linked oxidoreductase easE from Claviceps fusiformis (Ergot fungus).